Here is a 493-residue protein sequence, read N- to C-terminus: MTGELDVDGEPRSPSIAVVILAAGQGTRMRSRLPKVLHPLAGLPLVGHVLATAEELGARHVVTVVRHDRDQVVDVVSRLAPDALIVDQDEIPGTGRAVEVGITALPDGFTGQVVVLSGDVPLLDAATLRSLVSAHRQARNDLTLLTARLDDPTGNGRIIRGQDGAFEAIVEQKDATGEQLRIDEVNAGVYVFDAEALRQTLGAIGTDNAQREKYLTDAADVIRRAGGSIEALPVRDSWLVAGINDRVQLTAAATELNARIIRRWQLAGVTIHDPRTTWIDVKATLAADVTVLPGTQILGASTVAAGATVGPDTTLRDTEVGEDATVRRTDAELAVIGARATVGPFSFLRPGTRLGDEGKIGAYVETKNVEIGAGSKVPHLSYVGDATIGEHSNVGAGAVFANYDGVSKHRTEVGDHVHLGSRNVLVAPVRIGTGSYTGAGAVIRKDVPPGALGISVAPQRNMVGWTEAKRPGTPEARAAVEAADGPADDASDA.

Residues 1 to 246 (MTGELDVDGE…SWLVAGINDR (246 aa)) form a pyrophosphorylase region. UDP-N-acetyl-alpha-D-glucosamine contacts are provided by residues 21–24 (LAAG), Lys-35, Gln-88, 93–94 (GT), 117–119 (SGD), Gly-156, Glu-171, Asn-186, and Asn-244. Asp-119 provides a ligand contact to Mg(2+). Asn-244 provides a ligand contact to Mg(2+). A linker region spans residues 247 to 267 (VQLTAAATELNARIIRRWQLA). Residues 268-493 (GVTIHDPRTT…DGPADDASDA (226 aa)) form an N-acetyltransferase region. Arg-349 and Lys-367 together coordinate UDP-N-acetyl-alpha-D-glucosamine. Residue His-379 is the Proton acceptor of the active site. UDP-N-acetyl-alpha-D-glucosamine contacts are provided by Tyr-382 and Asn-393. Acetyl-CoA contacts are provided by residues Ala-396, 402-403 (NY), Ser-421, and Ala-439. A disordered region spans residues 470–493 (RPGTPEARAAVEAADGPADDASDA).

This sequence in the N-terminal section; belongs to the N-acetylglucosamine-1-phosphate uridyltransferase family. In the C-terminal section; belongs to the transferase hexapeptide repeat family. As to quaternary structure, homotrimer. Requires Mg(2+) as cofactor.

The protein resides in the cytoplasm. The enzyme catalyses alpha-D-glucosamine 1-phosphate + acetyl-CoA = N-acetyl-alpha-D-glucosamine 1-phosphate + CoA + H(+). The catalysed reaction is N-acetyl-alpha-D-glucosamine 1-phosphate + UTP + H(+) = UDP-N-acetyl-alpha-D-glucosamine + diphosphate. The protein operates within nucleotide-sugar biosynthesis; UDP-N-acetyl-alpha-D-glucosamine biosynthesis; N-acetyl-alpha-D-glucosamine 1-phosphate from alpha-D-glucosamine 6-phosphate (route II): step 2/2. It functions in the pathway nucleotide-sugar biosynthesis; UDP-N-acetyl-alpha-D-glucosamine biosynthesis; UDP-N-acetyl-alpha-D-glucosamine from N-acetyl-alpha-D-glucosamine 1-phosphate: step 1/1. Its pathway is bacterial outer membrane biogenesis; LPS lipid A biosynthesis. Catalyzes the last two sequential reactions in the de novo biosynthetic pathway for UDP-N-acetylglucosamine (UDP-GlcNAc). The C-terminal domain catalyzes the transfer of acetyl group from acetyl coenzyme A to glucosamine-1-phosphate (GlcN-1-P) to produce N-acetylglucosamine-1-phosphate (GlcNAc-1-P), which is converted into UDP-GlcNAc by the transfer of uridine 5-monophosphate (from uridine 5-triphosphate), a reaction catalyzed by the N-terminal domain. The protein is Bifunctional protein GlmU of Clavibacter sepedonicus (Clavibacter michiganensis subsp. sepedonicus).